The following is a 329-amino-acid chain: Ribosomal RNA small subunit methyltransferase H (329 aa).

S-adenosyl-L-methionine is bound by residues 39-41, Asp57, Phe84, Asp100, and Gln107; that span reads GGY. The tract at residues 285–305 is disordered; sequence GPDKDELAQNPRSRSALLRVG.

It belongs to the methyltransferase superfamily. RsmH family.

The protein resides in the cytoplasm. It carries out the reaction cytidine(1402) in 16S rRNA + S-adenosyl-L-methionine = N(4)-methylcytidine(1402) in 16S rRNA + S-adenosyl-L-homocysteine + H(+). Functionally, specifically methylates the N4 position of cytidine in position 1402 (C1402) of 16S rRNA. This Ruegeria sp. (strain TM1040) (Silicibacter sp.) protein is Ribosomal RNA small subunit methyltransferase H.